The chain runs to 703 residues: Fibulin-1 (703 aa).

Positions 1-29 (MERAAPSRRVPLPLLLLGGLALLAAGVDA) are cleaved as a signal peptide. Disulfide bonds link Cys-36–Cys-61, Cys-37–Cys-68, Cys-50–Cys-69, Cys-78–Cys-109, Cys-91–Cys-110, Cys-112–Cys-136, Cys-113–Cys-143, Cys-126–Cys-144, Cys-180–Cys-190, Cys-186–Cys-199, Cys-201–Cys-214, Cys-220–Cys-233, Cys-227–Cys-242, Cys-248–Cys-260, Cys-266–Cys-279, Cys-273–Cys-288, Cys-294–Cys-306, Cys-312–Cys-325, Cys-319–Cys-334, Cys-341–Cys-354, Cys-360–Cys-373, Cys-367–Cys-382, Cys-384–Cys-397, Cys-403–Cys-415, Cys-411–Cys-424, Cys-426–Cys-439, Cys-445–Cys-454, Cys-450–Cys-463, Cys-465–Cys-479, Cys-485–Cys-498, Cys-494–Cys-507, Cys-509–Cys-523, Cys-529–Cys-542, Cys-536–Cys-551, and Cys-556–Cys-577. Anaphylatoxin-like domains are found at residues 36 to 76 (CCAD…LEEL), 77 to 111 (HCATGISLANEQDRCATPHGDNASLEATFVKRCCH), and 112 to 144 (CCLLGRAAQAQGQSCEYSLMVGYQCGQVFQACC). The N-linked (GlcNAc...) (complex) asparagine glycan is linked to Asn-98. Residues 176–215 (LNDRCRGGGPCKQQCRDTGDEVVCSCFVGYQLLSDGVSCE) enclose the EGF-like 1 domain. An EGF-like 2; calcium-binding domain is found at 216–261 (DVNECITGSHSCRLGESCINTVGSFRCQRDSSCGTGYELTEDNSCK). The EGF-like 3; calcium-binding domain occupies 262–307 (DIDECESGIHNCLPDFICQNTLGSFRCRPKLQCKSGFIQDALGNCI). The EGF-like 4; calcium-binding domain maps to 308 to 355 (DINECLSISAPCPIGHTCINTEGSYTCQKNVPNCGRGYHLNEEGTRCV). The EGF-like 5; calcium-binding domain maps to 356–398 (DVDECAPPAEPCGKGHRCVNSPGSFRCECKTGYYFDGISRMCV). A self-association and FN1-binding; calcium is necessary for homotypic binding, but not for heterotypic binding region spans residues 356–440 (DVDECAPPAE…RLSVDGRSCE (85 aa)). Residues 399-440 (DVNECQRYPGRLCGHKCENTLGSYLCSCSVGFRLSVDGRSCE) form the EGF-like 6; calcium-binding domain. One can recognise an EGF-like 7; calcium-binding domain in the interval 441 to 480 (DINECSSSPCSQECANVYGSYQCYCRRGYQLSDVDGVTCE). An EGF-like 8; calcium-binding domain is found at 481–524 (DIDECALPTGGHICSYRCINIPGSFQCSCPSSGYRLAPNGRNCQ). The 54-residue stretch at 525-578 (DIDECVTGIHNCSINETCFNIQGGFRCLAFECPENYRRSAATLQQEKTDTVRCI) folds into the EGF-like 9; calcium-binding domain. N-linked (GlcNAc...) asparagine glycans are attached at residues Asn-535 and Asn-539.

It belongs to the fibulin family. As to quaternary structure, homomultimerizes and interacts with various extracellular matrix components such as FN1, LAMA1, LAMA2, NID, ACAN, CSPG2 and type IV collagen. Also interacts with APP and FGB. Interacts with FBLN7. Interacts with CCN3. (Microbial infection) Interacts with human papillomavirus/HPV type 16, 18 and 31 proteins E6. As to expression, isoform A and isoform B are only expressed in placenta. Isoform C and isoform D are expressed in a variety of tissues and cultured cells.

Its subcellular location is the secreted. The protein localises to the extracellular space. The protein resides in the extracellular matrix. Its function is as follows. Incorporated into fibronectin-containing matrix fibers. May play a role in cell adhesion and migration along protein fibers within the extracellular matrix (ECM). Could be important for certain developmental processes and contribute to the supramolecular organization of ECM architecture, in particular to those of basement membranes. Has been implicated in a role in cellular transformation and tumor invasion, it appears to be a tumor suppressor. May play a role in haemostasis and thrombosis owing to its ability to bind fibrinogen and incorporate into clots. Could play a significant role in modulating the neurotrophic activities of APP, particularly soluble APP. This chain is Fibulin-1 (FBLN1), found in Homo sapiens (Human).